A 312-amino-acid chain; its full sequence is Translation initiation factor IF3-2, chloroplastic (312 aa).

The N-terminal 55 residues, 1-55, are a transit peptide targeting the chloroplast; sequence MAGITSSTVGFNAVFTGITKTVSSHSLFSVDSKLCSLRLSKTELSFTNLTPSPRR. Basic and acidic residues predominate over residues 253–263; it reads EMIRKPQEPPT. The disordered stretch occupies residues 253 to 312; that stretch reads EMIRKPQEPPTRKKKKTAENEASASAAEITAEPEPEPEPEPEPEPEPEPEPEPEPLQIDS. The span at 272 to 282 shows a compositional bias: low complexity; sequence NEASASAAEIT. Positions 283–305 are enriched in acidic residues; the sequence is AEPEPEPEPEPEPEPEPEPEPEP.

It belongs to the IF-3 family. In terms of assembly, monomer. In terms of tissue distribution, highly expressed in young, newly emerged leaves.

The protein resides in the plastid. The protein localises to the chloroplast. In terms of biological role, chloroplast translation initiation factor that is essential for the coordination of leaf and chloroplast development. IF-3 binds to the 30S ribosomal subunit and shifts the equilibrium between 70S ribosomes and their 50S and 30S subunits in favor of the free subunits, thus enhancing the availability of 30S subunits on which protein synthesis initiation begins. The sequence is that of Translation initiation factor IF3-2, chloroplastic from Arabidopsis thaliana (Mouse-ear cress).